The following is a 197-amino-acid chain: Imidazoleglycerol-phosphate dehydratase (197 aa).

This sequence belongs to the imidazoleglycerol-phosphate dehydratase family.

It is found in the cytoplasm. It catalyses the reaction D-erythro-1-(imidazol-4-yl)glycerol 3-phosphate = 3-(imidazol-4-yl)-2-oxopropyl phosphate + H2O. Its pathway is amino-acid biosynthesis; L-histidine biosynthesis; L-histidine from 5-phospho-alpha-D-ribose 1-diphosphate: step 6/9. The protein is Imidazoleglycerol-phosphate dehydratase of Chromohalobacter salexigens (strain ATCC BAA-138 / DSM 3043 / CIP 106854 / NCIMB 13768 / 1H11).